We begin with the raw amino-acid sequence, 418 residues long: Serine hydroxymethyltransferase (418 aa).

(6S)-5,6,7,8-tetrahydrofolate is bound by residues Leu121 and 125 to 127; that span reads GHL. Lys230 is subject to N6-(pyridoxal phosphate)lysine. Residue 355–357 coordinates (6S)-5,6,7,8-tetrahydrofolate; that stretch reads SPF.

It belongs to the SHMT family. Homodimer. Pyridoxal 5'-phosphate is required as a cofactor.

It localises to the cytoplasm. The enzyme catalyses (6R)-5,10-methylene-5,6,7,8-tetrahydrofolate + glycine + H2O = (6S)-5,6,7,8-tetrahydrofolate + L-serine. The protein operates within one-carbon metabolism; tetrahydrofolate interconversion. It functions in the pathway amino-acid biosynthesis; glycine biosynthesis; glycine from L-serine: step 1/1. Catalyzes the reversible interconversion of serine and glycine with tetrahydrofolate (THF) serving as the one-carbon carrier. This reaction serves as the major source of one-carbon groups required for the biosynthesis of purines, thymidylate, methionine, and other important biomolecules. Also exhibits THF-independent aldolase activity toward beta-hydroxyamino acids, producing glycine and aldehydes, via a retro-aldol mechanism. This Streptococcus agalactiae serotype V (strain ATCC BAA-611 / 2603 V/R) protein is Serine hydroxymethyltransferase.